Consider the following 319-residue polypeptide: ATP-dependent 6-phosphofructokinase (319 aa).

Residue Gly-11 coordinates ATP. 21 to 25 (RAVTR) provides a ligand contact to ADP. Residues 72–73 (RF) and 102–105 (GDGS) contribute to the ATP site. Residue Asp-103 participates in Mg(2+) binding. 125–127 (SID) contacts substrate. Residue Asp-127 is the Proton acceptor of the active site. Arg-154 contributes to the ADP binding site. Substrate-binding positions include Arg-162 and 169–171 (MGR). ADP is bound by residues 185–187 (GAD) and 213–215 (KKH). Residues Glu-222, Arg-243, and 249 to 252 (HMQR) contribute to the substrate site.

This sequence belongs to the phosphofructokinase type A (PFKA) family. ATP-dependent PFK group I subfamily. Prokaryotic clade 'B1' sub-subfamily. In terms of assembly, homotetramer. It depends on Mg(2+) as a cofactor.

The protein resides in the cytoplasm. It catalyses the reaction beta-D-fructose 6-phosphate + ATP = beta-D-fructose 1,6-bisphosphate + ADP + H(+). The protein operates within carbohydrate degradation; glycolysis; D-glyceraldehyde 3-phosphate and glycerone phosphate from D-glucose: step 3/4. With respect to regulation, allosterically activated by ADP and other diphosphonucleosides, and allosterically inhibited by phosphoenolpyruvate. In terms of biological role, catalyzes the phosphorylation of D-fructose 6-phosphate to fructose 1,6-bisphosphate by ATP, the first committing step of glycolysis. The protein is ATP-dependent 6-phosphofructokinase of Lactobacillus johnsonii (strain CNCM I-12250 / La1 / NCC 533).